Reading from the N-terminus, the 363-residue chain is 3-isopropylmalate dehydrogenase (363 aa).

Residue 78 to 91 participates in NAD(+) binding; sequence GPKWEHLPPDQQPE. Substrate is bound by residues Arg-99, Arg-109, Arg-138, and Asp-227. Mg(2+)-binding residues include Asp-227, Asp-251, and Asp-255. 285-297 is a binding site for NAD(+); sequence GSAPDIAGKNIAN.

This sequence belongs to the isocitrate and isopropylmalate dehydrogenases family. LeuB type 1 subfamily. Homodimer. The cofactor is Mg(2+). Requires Mn(2+) as cofactor.

It is found in the cytoplasm. The catalysed reaction is (2R,3S)-3-isopropylmalate + NAD(+) = 4-methyl-2-oxopentanoate + CO2 + NADH. It functions in the pathway amino-acid biosynthesis; L-leucine biosynthesis; L-leucine from 3-methyl-2-oxobutanoate: step 3/4. Catalyzes the oxidation of 3-carboxy-2-hydroxy-4-methylpentanoate (3-isopropylmalate) to 3-carboxy-4-methyl-2-oxopentanoate. The product decarboxylates to 4-methyl-2 oxopentanoate. This Escherichia coli O157:H7 protein is 3-isopropylmalate dehydrogenase.